The chain runs to 274 residues: tRNA-cytidine(32) 2-sulfurtransferase (274 aa).

Residues 40 to 45 (SGGKDS) carry the PP-loop motif motif. Residues cysteine 115, cysteine 118, and cysteine 206 each contribute to the [4Fe-4S] cluster site.

The protein belongs to the TtcA family. In terms of assembly, homodimer. Requires Mg(2+) as cofactor. [4Fe-4S] cluster serves as cofactor.

Its subcellular location is the cytoplasm. The enzyme catalyses cytidine(32) in tRNA + S-sulfanyl-L-cysteinyl-[cysteine desulfurase] + AH2 + ATP = 2-thiocytidine(32) in tRNA + L-cysteinyl-[cysteine desulfurase] + A + AMP + diphosphate + H(+). Its pathway is tRNA modification. Functionally, catalyzes the ATP-dependent 2-thiolation of cytidine in position 32 of tRNA, to form 2-thiocytidine (s(2)C32). The sulfur atoms are provided by the cysteine/cysteine desulfurase (IscS) system. The protein is tRNA-cytidine(32) 2-sulfurtransferase of Pseudomonas syringae pv. tomato (strain ATCC BAA-871 / DC3000).